The sequence spans 158 residues: UPF0225 protein PSEEN1229 (158 aa).

It belongs to the UPF0225 family.

The chain is UPF0225 protein PSEEN1229 from Pseudomonas entomophila (strain L48).